We begin with the raw amino-acid sequence, 358 residues long: Microbial Terpene synthase-like protein 13 (358 aa).

This sequence belongs to the terpene synthase family.

Functionally, no terpene synthase activity detected in vitro. The protein is Microbial Terpene synthase-like protein 13 of Selaginella moellendorffii (Spikemoss).